The following is a 267-amino-acid chain: Tryptophan synthase alpha chain (267 aa).

Active-site proton acceptor residues include Glu-49 and Asp-60.

The protein belongs to the TrpA family. Tetramer of two alpha and two beta chains.

It carries out the reaction (1S,2R)-1-C-(indol-3-yl)glycerol 3-phosphate + L-serine = D-glyceraldehyde 3-phosphate + L-tryptophan + H2O. Its pathway is amino-acid biosynthesis; L-tryptophan biosynthesis; L-tryptophan from chorismate: step 5/5. Functionally, the alpha subunit is responsible for the aldol cleavage of indoleglycerol phosphate to indole and glyceraldehyde 3-phosphate. This is Tryptophan synthase alpha chain from Methylococcus capsulatus (strain ATCC 33009 / NCIMB 11132 / Bath).